We begin with the raw amino-acid sequence, 75 residues long: uncharacterized protein (75 aa).

A helical membrane pass occupies residues 7–26 (ATAPLFVIVGLAVVLTGATG).

The protein resides in the membrane. This is an uncharacterized protein from Dictyostelium discoideum (Social amoeba).